The sequence spans 124 residues: Small ribosomal subunit protein uS12 (124 aa).

The interval 105-124 (SGVNDRRQGRSKYGAKRPKS) is disordered. Residues 113–124 (GRSKYGAKRPKS) are compositionally biased toward basic residues.

The protein belongs to the universal ribosomal protein uS12 family. In terms of assembly, part of the 30S ribosomal subunit. Contacts proteins S8 and S17. May interact with IF1 in the 30S initiation complex.

Functionally, with S4 and S5 plays an important role in translational accuracy. Its function is as follows. Interacts with and stabilizes bases of the 16S rRNA that are involved in tRNA selection in the A site and with the mRNA backbone. Located at the interface of the 30S and 50S subunits, it traverses the body of the 30S subunit contacting proteins on the other side and probably holding the rRNA structure together. The combined cluster of proteins S8, S12 and S17 appears to hold together the shoulder and platform of the 30S subunit. This Idiomarina loihiensis (strain ATCC BAA-735 / DSM 15497 / L2-TR) protein is Small ribosomal subunit protein uS12.